The sequence spans 79 residues: uncharacterized protein (79 aa).

A disordered region spans residues 1–27; that stretch reads MRQRGQEHLPTSVKSEPRACNNPTVAE.

This is an uncharacterized protein from Homo sapiens (Human).